A 261-amino-acid chain; its full sequence is Imidazole glycerol phosphate synthase subunit HisF (261 aa).

Residues D11 and D130 contribute to the active site.

The protein belongs to the HisA/HisF family. Heterodimer of HisH and HisF.

The protein localises to the cytoplasm. The catalysed reaction is 5-[(5-phospho-1-deoxy-D-ribulos-1-ylimino)methylamino]-1-(5-phospho-beta-D-ribosyl)imidazole-4-carboxamide + L-glutamine = D-erythro-1-(imidazol-4-yl)glycerol 3-phosphate + 5-amino-1-(5-phospho-beta-D-ribosyl)imidazole-4-carboxamide + L-glutamate + H(+). It participates in amino-acid biosynthesis; L-histidine biosynthesis; L-histidine from 5-phospho-alpha-D-ribose 1-diphosphate: step 5/9. Its function is as follows. IGPS catalyzes the conversion of PRFAR and glutamine to IGP, AICAR and glutamate. The HisF subunit catalyzes the cyclization activity that produces IGP and AICAR from PRFAR using the ammonia provided by the HisH subunit. This chain is Imidazole glycerol phosphate synthase subunit HisF, found in Heliobacterium modesticaldum (strain ATCC 51547 / Ice1).